A 79-amino-acid polypeptide reads, in one-letter code: Sec-independent protein translocase protein TatA (79 aa).

The chain crosses the membrane as a helical span at residues 1 to 21 (MGGISIWQLLIIALIVILLFG). The segment at 42–79 (AMTSETSEEEKKALEDSQTAQTSQQAEKKPESKDKEQA) is disordered. The segment covering 57–66 (DSQTAQTSQQ) has biased composition (polar residues). Over residues 67-79 (AEKKPESKDKEQA) the composition is skewed to basic and acidic residues.

It belongs to the TatA/E family. As to quaternary structure, the Tat system comprises two distinct complexes: a TatABC complex, containing multiple copies of TatA, TatB and TatC subunits, and a separate TatA complex, containing only TatA subunits. Substrates initially bind to the TatABC complex, which probably triggers association of the separate TatA complex to form the active translocon.

The protein resides in the cell inner membrane. Functionally, part of the twin-arginine translocation (Tat) system that transports large folded proteins containing a characteristic twin-arginine motif in their signal peptide across membranes. TatA could form the protein-conducting channel of the Tat system. The polypeptide is Sec-independent protein translocase protein TatA (Shewanella denitrificans (strain OS217 / ATCC BAA-1090 / DSM 15013)).